A 233-amino-acid polypeptide reads, in one-letter code: Large ribosomal subunit protein uL22m (233 aa).

This sequence belongs to the universal ribosomal protein uL22 family. As to quaternary structure, component of the mitochondrial ribosome large subunit (39S) which comprises a 16S rRNA and about 50 distinct proteins.

Its subcellular location is the mitochondrion. The sequence is that of Large ribosomal subunit protein uL22m (mRpL22) from Drosophila melanogaster (Fruit fly).